A 771-amino-acid polypeptide reads, in one-letter code: MTTNLYAIAGPSKPTTPTSTPSPRSEPPSPLKSLTSLPTNPLNPQGTSTSNALTNQSSSTGIGISKPGLSVDENGEVMKVPAFLNKLYTMVSDPEVDDLIYWGENGDSFFVPNAELFGRELLPRWFKHSNFSSFVRQLNMYGFHKVPHLQSGALKNETPIELWEFANPYFKRGQPQLLTKVTRKNNRLSNSGVGSSSSLGGSGAGGGMNTRSASAAAASGSGSGQIQQAISQGHEAGNHSTSGKYLITDGTTPGSAPPSHTSAGPLIAPQTLDLSAINSGIAAIRQTQASIATDLRKLQASNEALWRQAYETQEKQRKHEETIDLIVSFLERLFGTEGEGLKGLKEAMRRGVGVRRDRDGREGRDSRDARFADDDDGGQKKRRRVGLDRMIEGGSGDGTGEHGEIESPSSDDRLVEIGSNSEYSIPSVKRTSSSSHPLSLGQLGSSRFTALPSEDPSPSGSGLGSTPYEGLRTTQASAHGAGADVNVTDPTLGMNHLSPLSDTDPLLPSSSNALAPYTSHPSFPSSNPNPSSAWAFNPSQPLLSPTSAVAAAHAYNLDPSLLQTTIGSLLQSPAVAQMFLKSLSASAQGQALTSHSHPHNPSLLNPNPNGNASTSASASAHDMNTEGLGTGSGTKDLDPTLALFSPLPSHSSLASQSNDLLKSYNDALTVGEGVDNLQESIDSLVRSMGLDLPNGGSSSVGVDVGDGSGVGTGTGEGDGEFNVDEFLQGLAKEGEGEEGEREVGGDGDASSSGAGAENGRKEDVIAQSGLK.

Positions 1 to 70 (MTTNLYAIAG…GIGISKPGLS (70 aa)) are disordered. Composition is skewed to low complexity over residues 11–23 (PSKPTTPTSTPSP) and 31–42 (LKSLTSLPTNPL). The segment covering 43 to 62 (NPQGTSTSNALTNQSSSTGI) has biased composition (polar residues). The DNA-binding element occupies 78–168 (MKVPAFLNKL…PIELWEFANP (91 aa)). A disordered region spans residues 183–266 (RKNNRLSNSG…PPSHTSAGPL (84 aa)). Low complexity-rich tracts occupy residues 189–199 (SNSGVGSSSSL) and 212–233 (SASAAAASGSGSGQIQQAISQG). The span at 238–262 (NHSTSGKYLITDGTTPGSAPPSHTS) shows a compositional bias: polar residues. Residues 280–333 (GIAAIRQTQASIATDLRKLQASNEALWRQAYETQEKQRKHEETIDLIVSFLERL) are involved in trimerization. Basic and acidic residues-rich tracts occupy residues 350–372 (RGVGVRRDRDGREGRDSRDARFA) and 399–415 (TGEHGEIESPSSDDRLV). 3 disordered regions span residues 350–513 (RGVG…SSNA), 590–634 (QALT…GSGT), and 708–771 (SGVG…SGLK). Residues 418-448 (GSNSEYSIPSVKRTSSSSHPLSLGQLGSSRF) are compositionally biased toward polar residues. 2 stretches are compositionally biased toward low complexity: residues 497–511 (LSPLSDTDPLLPSSS) and 599–620 (HNPSLLNPNPNGNASTSASASA).

It belongs to the HSF family. In terms of assembly, homotrimer. Homotrimerization increases the affinity of HSF1 to DNA. Interacts with transcriptional coregulator SSA1 on chromatin. Post-translationally, phosphorylated at high temperature.

The protein localises to the nucleus. In terms of biological role, DNA-binding transcription factor that specifically binds heat shock promoter elements (HSE) and activates transcription. Promotes thermotolerance by transiently regulating a subset of genes. Induces expression of STI, SSA1, SSA2, HSP78 and KAR2 during the heat response. The sequence is that of Heat shock transcription factor from Cryptococcus neoformans var. grubii serotype A (strain H99 / ATCC 208821 / CBS 10515 / FGSC 9487) (Filobasidiella neoformans var. grubii).